Here is a 176-residue protein sequence, read N- to C-terminus: Nascent polypeptide-associated complex subunit alpha (176 aa).

An NAC-A/B domain is found at 16–80 (PKNEKKAREL…AKVDDMNQRI (65 aa)). The segment at 83–110 (AQAAQAAETDAHAGHTHSHGEEDKSPEA) is disordered. Basic and acidic residues predominate over residues 91-110 (TDAHAGHTHSHGEEDKSPEA). The region spanning 138–175 (LDAKDIDIIVEQTQVSRAKAVKALRKHDGDMVNAIMEL) is the UBA domain.

This sequence belongs to the NAC-alpha family. In terms of assembly, part of the nascent polypeptide-associated complex (NAC), consisting of EGD2 and EGD1. NAC associates with ribosomes via EGD1.

It is found in the cytoplasm. It localises to the nucleus. Component of the nascent polypeptide-associated complex (NAC), a dynamic component of the ribosomal exit tunnel, protecting the emerging polypeptides from interaction with other cytoplasmic proteins to ensure appropriate nascent protein targeting. The NAC complex also promotes mitochondrial protein import by enhancing productive ribosome interactions with the outer mitochondrial membrane and blocks the inappropriate interaction of ribosomes translating non-secretory nascent polypeptides with translocation sites in the membrane of the endoplasmic reticulum. EGD2 may also be involved in transcription regulation. This is Nascent polypeptide-associated complex subunit alpha (EGD2) from Scheffersomyces stipitis (strain ATCC 58785 / CBS 6054 / NBRC 10063 / NRRL Y-11545) (Yeast).